Reading from the N-terminus, the 307-residue chain is Putative S-adenosyl-L-methionine-dependent methyltransferase Mflv_5023 (307 aa).

S-adenosyl-L-methionine-binding positions include Asp133 and 162-163 (DL). Residues 213-234 (SRLAVESVPSQQSADQDEMREK) form a disordered region.

Belongs to the UPF0677 family.

In terms of biological role, exhibits S-adenosyl-L-methionine-dependent methyltransferase activity. The sequence is that of Putative S-adenosyl-L-methionine-dependent methyltransferase Mflv_5023 from Mycolicibacterium gilvum (strain PYR-GCK) (Mycobacterium gilvum (strain PYR-GCK)).